A 492-amino-acid chain; its full sequence is Cyclic di-GMP phosphodiesterase VC_1295 (492 aa).

6 consecutive transmembrane segments (helical) span residues I14–Y34, E49–L69, F80–N100, L111–S131, L160–I180, and E205–S225. In terms of domain architecture, HAMP spans R226–N278. Positions V280–D490 constitute an HD-GYP domain.

Its subcellular location is the cell inner membrane. The catalysed reaction is 3',3'-c-di-GMP + 2 H2O = 2 GMP + 2 H(+). Functionally, phosphodiesterase (PDE) that catalyzes the hydrolysis of cyclic diguanylate (c-di-GMP) to GMP in vitro. Increases motility and decreases biofilm formation in vivo. This Vibrio cholerae serotype O1 (strain ATCC 39315 / El Tor Inaba N16961) protein is Cyclic di-GMP phosphodiesterase VC_1295.